The sequence spans 254 residues: Urease accessory protein UreD (254 aa).

This sequence belongs to the UreD family. In terms of assembly, ureD, UreF and UreG form a complex that acts as a GTP-hydrolysis-dependent molecular chaperone, activating the urease apoprotein by helping to assemble the nickel containing metallocenter of UreC. The UreE protein probably delivers the nickel.

The protein localises to the cytoplasm. Its function is as follows. Required for maturation of urease via the functional incorporation of the urease nickel metallocenter. The polypeptide is Urease accessory protein UreD (Streptomyces coelicolor (strain ATCC BAA-471 / A3(2) / M145)).